Reading from the N-terminus, the 247-residue chain is Probable transcriptional regulatory protein DvMF_3201 (247 aa).

The disordered stretch occupies residues Met1–Arg21.

Belongs to the TACO1 family.

Its subcellular location is the cytoplasm. This chain is Probable transcriptional regulatory protein DvMF_3201, found in Nitratidesulfovibrio vulgaris (strain DSM 19637 / Miyazaki F) (Desulfovibrio vulgaris).